Reading from the N-terminus, the 126-residue chain is MPTINQLVRKGRQSETTKSKSPALQDCPQRRGVCTRVYTTTPKKPNSALRKVAKVRLTNGFEVISYIGGEGHNLQEHSVVLIRGGRVKDLPGVRYHMVRGSLDTQGVKDRKQARSKYGAKRAKAGK.

Residues 1-28 form a disordered region; that stretch reads MPTINQLVRKGRQSETTKSKSPALQDCP. D89 carries the post-translational modification 3-methylthioaspartic acid. Residues 103–126 form a disordered region; that stretch reads DTQGVKDRKQARSKYGAKRAKAGK. A compositionally biased stretch (basic residues) spans 113 to 126; the sequence is ARSKYGAKRAKAGK.

This sequence belongs to the universal ribosomal protein uS12 family. As to quaternary structure, part of the 30S ribosomal subunit. Contacts proteins S8 and S17. May interact with IF1 in the 30S initiation complex.

In terms of biological role, with S4 and S5 plays an important role in translational accuracy. Functionally, interacts with and stabilizes bases of the 16S rRNA that are involved in tRNA selection in the A site and with the mRNA backbone. Located at the interface of the 30S and 50S subunits, it traverses the body of the 30S subunit contacting proteins on the other side and probably holding the rRNA structure together. The combined cluster of proteins S8, S12 and S17 appears to hold together the shoulder and platform of the 30S subunit. This Paraburkholderia phytofirmans (strain DSM 17436 / LMG 22146 / PsJN) (Burkholderia phytofirmans) protein is Small ribosomal subunit protein uS12.